A 348-amino-acid chain; its full sequence is sn-glycerol-3-phosphate import ATP-binding protein UgpC (348 aa).

The ABC transporter domain occupies I4–I235. G37–S44 contributes to the ATP binding site.

The protein belongs to the ABC transporter superfamily. sn-glycerol-3-phosphate importer (TC 3.A.1.1.3) family. The complex is composed of two ATP-binding proteins (UgpC), two transmembrane proteins (UgpA and UgpE) and a solute-binding protein (UgpB).

It localises to the cell inner membrane. The catalysed reaction is sn-glycerol 3-phosphate(out) + ATP + H2O = sn-glycerol 3-phosphate(in) + ADP + phosphate + H(+). Functionally, part of the ABC transporter complex UgpBAEC involved in sn-glycerol-3-phosphate (G3P) import. Responsible for energy coupling to the transport system. This Bartonella quintana (strain Toulouse) (Rochalimaea quintana) protein is sn-glycerol-3-phosphate import ATP-binding protein UgpC.